The primary structure comprises 374 residues: Deoxyguanosinetriphosphate triphosphohydrolase-like protein (374 aa).

The 132-residue stretch at R65 to N196 folds into the HD domain.

This sequence belongs to the dGTPase family. Type 2 subfamily.

In Nitrosomonas europaea (strain ATCC 19718 / CIP 103999 / KCTC 2705 / NBRC 14298), this protein is Deoxyguanosinetriphosphate triphosphohydrolase-like protein (dgt).